Consider the following 78-residue polypeptide: Chondrosarcoma-associated gene 1 protein (78 aa).

The N-terminal stretch at 1–19 is a signal peptide; that stretch reads MSATTACWPAFTVLGEARG. The disordered stretch occupies residues 35–78; the sequence is KMSRKPRASSPFSNNHPSTPKRFPRQPRREKGPVKEVPGTKGSP.

Expressed in chondrosarcoma, melanoma, cartilage and testis, but not in other normal tissues.

The protein resides in the cytoplasm. It localises to the cytoskeleton. It is found in the microtubule organizing center. Its subcellular location is the centrosome. The protein localises to the spindle pole. May play an important role in maintaining centrosome integrity during mitosis. In Homo sapiens (Human), this protein is Chondrosarcoma-associated gene 1 protein.